The primary structure comprises 308 residues: MQSEMNYYKFDRAEWSQFHSQNFTNVTDEELAQLRSLNDEISLDDVKMIYSPLRHLIHIRYEDYQGDMFTLSRFLGMQRNPHTPFIIGIAGSVAVGKSTTARLLQLLLSRAYPEKRVQQMTTDGFLYPNAELERRGILDRKGFPESYDMELLIHFMNNVKNASGALRAPKYSHQIYDIVPGEYELIDRPDILIVEGINVLQLPSKQPIYVSDYFDFSIYVDANPDLIEQWYLERFGILLDTAFTDPNNYYYQYAIGDRADAFAMARQVWRDVNLKNLNEYILPTKNRADIILHKTTGHEIDQVSLRKW.

91-98 (GSVAVGKS) serves as a coordination point for ATP.

This sequence belongs to the prokaryotic pantothenate kinase family.

The protein localises to the cytoplasm. It catalyses the reaction (R)-pantothenate + ATP = (R)-4'-phosphopantothenate + ADP + H(+). The protein operates within cofactor biosynthesis; coenzyme A biosynthesis; CoA from (R)-pantothenate: step 1/5. The protein is Pantothenate kinase of Lacticaseibacillus paracasei (strain ATCC 334 / BCRC 17002 / CCUG 31169 / CIP 107868 / KCTC 3260 / NRRL B-441) (Lactobacillus paracasei).